A 614-amino-acid chain; its full sequence is MSGKAQQQSRIKELITRGREQGYLTYAEVNDHLPEDISDPEQVEDIIRMINDMGINVFESAPDADALLLAEADTDEAAAEEAAAALAAVETDIRRTTDPVRMYMREMGTVELLTREGEIEIAKRIEEGIREVMGAIAHFPGTVDYILGEYDRVNRGCRLSDVLSGYIDPDDNIAAPTEEVPIPGTKAAAAKEEADDDEEESEGGDDEEEPKAALTRSSQPSVSVRYPSSFSDHQGPEEKRSYPQGKRRALQALADLFMPIKLVPKQFEVLVERVRDALNRLRQQERAIMQLCVRDARMPRADFLRMFPSNETDQTWSGDLAKRNTKWAAALGEKDAAIVACQQKLIDLETETGLTVAEIKEINRRMSIGEAKARRAKKEMVEANLRLVISIAKKYTNRGLQFLDLIQEGNIGLMKAVDKFEYRRGYKFSTYATWWIRQAITRSIADQARTIRIPVHMIETINKLNRISRQMLQEMGREPTPEELGERMEMPEDKIRKVLKIAKEPISMETPIGDDEDSHLGDFIEDSTMQSPIYVATVESLKEATRDVLSGLTAREAKVLRMRFGIDMNTDHTLEEVGKQFDVTRERIRQIEAKAWRKLRHPTRSEHLRSFLDE.

The disordered stretch occupies residues 168–245; the sequence is DPDDNIAAPT…PEEKRSYPQG (78 aa). The segment covering 193–209 has biased composition (acidic residues); it reads EADDDEEESEGGDDEEE. The segment covering 215–232 has biased composition (polar residues); the sequence is TRSSQPSVSVRYPSSFSD. The tract at residues 380 to 450 is sigma-70 factor domain-2; that stretch reads MVEANLRLVI…TRSIADQART (71 aa). The short motif at 404–407 is the Interaction with polymerase core subunit RpoC element; it reads DLIQ. Positions 459–535 are sigma-70 factor domain-3; it reads ETINKLNRIS…DSTMQSPIYV (77 aa). The interval 548-601 is sigma-70 factor domain-4; that stretch reads VLSGLTAREAKVLRMRFGIDMNTDHTLEEVGKQFDVTRERIRQIEAKAWRKLRH. A DNA-binding region (H-T-H motif) is located at residues 574–593; sequence LEEVGKQFDVTRERIRQIEA.

The protein belongs to the sigma-70 factor family. RpoD/SigA subfamily. Interacts transiently with the RNA polymerase catalytic core.

Its subcellular location is the cytoplasm. Sigma factors are initiation factors that promote the attachment of RNA polymerase to specific initiation sites and are then released. This sigma factor is the primary sigma factor during exponential growth. The sequence is that of RNA polymerase sigma factor RpoD from Pseudomonas putida (Arthrobacter siderocapsulatus).